We begin with the raw amino-acid sequence, 123 residues long: Small ribosomal subunit protein uS12 (123 aa).

Aspartate 89 is modified (3-methylthioaspartic acid). The disordered stretch occupies residues 101-123 (SLDTSGVKDRKQGRSKYGAKRPK). Basic residues predominate over residues 113–123 (GRSKYGAKRPK).

This sequence belongs to the universal ribosomal protein uS12 family. Part of the 30S ribosomal subunit. Contacts proteins S8 and S17. May interact with IF1 in the 30S initiation complex.

Its function is as follows. With S4 and S5 plays an important role in translational accuracy. Interacts with and stabilizes bases of the 16S rRNA that are involved in tRNA selection in the A site and with the mRNA backbone. Located at the interface of the 30S and 50S subunits, it traverses the body of the 30S subunit contacting proteins on the other side and probably holding the rRNA structure together. The combined cluster of proteins S8, S12 and S17 appears to hold together the shoulder and platform of the 30S subunit. In Stutzerimonas stutzeri (strain A1501) (Pseudomonas stutzeri), this protein is Small ribosomal subunit protein uS12.